The chain runs to 244 residues: MAPSRANTPSDDELDNILNGITEGRDISGTQAESTRPAYASKGSGNAGDGLGIDEEIIITKKRIPIPKLDDNRLLSDPGIPRLRRISKDRLRFKGKGHEYGDIARMLNMYQLWLDDLYPRAKFADALTIIEKVGHTKRMQMMRKEWIDEGKPRRTSAYEEEDADEVVVQAPTTEQATESMEGVEQGEEGAERAGPDEDELDALLAESAQQNTSAPKTLPVRTAGGEDDPFADEMEAMVDMEDMW.

2 disordered regions span residues 1 to 47 (MAPS…SGNA) and 172 to 229 (TTEQ…EDDP).

This sequence belongs to the CSM3 family. As to quaternary structure, component of the fork protection complex (FPC) consisting of TOF1 and CSM3.

The protein localises to the nucleus. Forms a fork protection complex (FPC) with TOF1 and which is required for chromosome segregation during meiosis and DNA damage repair. FPC coordinates leading and lagging strand synthesis and moves with the replication fork. FPC stabilizes replication forks in a configuration that is recognized by replication checkpoint sensors. This chain is Chromosome segregation in meiosis protein 3 (CSM3), found in Phaeosphaeria nodorum (strain SN15 / ATCC MYA-4574 / FGSC 10173) (Glume blotch fungus).